A 523-amino-acid polypeptide reads, in one-letter code: Maturase K (523 aa).

The protein belongs to the intron maturase 2 family. MatK subfamily.

Its subcellular location is the plastid. The protein resides in the chloroplast. In terms of biological role, usually encoded in the trnK tRNA gene intron. Probably assists in splicing its own and other chloroplast group II introns. The sequence is that of Maturase K from Asphodeline lutea (King's spear).